The primary structure comprises 360 residues: Protein phosphatase 1L (360 aa).

At 1–25 the chain is on the extracellular side; that stretch reads MIEDTMTLLSLLGRIMRYFLLRPET. Residues 26 to 42 traverse the membrane as a helical segment; sequence LFLLCISLALWSYFFHT. At 43–360 the chain is on the cytoplasmic side; it reads DEVKTIVKSS…FRNSSKTEEQ (318 aa). The region spanning 92–351 is the PPM-type phosphatase domain; sequence NVAVYSIQGR…DNITVMVVKF (260 aa). The Mn(2+) site is built by Asp128, Gly129, Asp302, and Asp342.

This sequence belongs to the PP2C family. In terms of assembly, interacts with MAP3K7/TAK1. Interacts with MAP3K5. Mg(2+) serves as cofactor. The cofactor is Mn(2+). As to expression, ubiquitous. Highly expressed in heart, placenta, lung, liver, kidney and pancreas.

The protein localises to the membrane. The enzyme catalyses O-phospho-L-seryl-[protein] + H2O = L-seryl-[protein] + phosphate. It carries out the reaction O-phospho-L-threonyl-[protein] + H2O = L-threonyl-[protein] + phosphate. Its function is as follows. Acts as a suppressor of the SAPK signaling pathways by associating with and dephosphorylating MAP3K7/TAK1 and MAP3K5, and by attenuating the association between MAP3K7/TAK1 and MAP2K4 or MAP2K6. This Homo sapiens (Human) protein is Protein phosphatase 1L (PPM1L).